The following is a 506-amino-acid chain: Histidine ammonia-lyase (506 aa).

The 5-imidazolinone (Ala-Gly) cross-link spans 142–144 (ASG). A 2,3-didehydroalanine (Ser) modification is found at Ser-143.

Belongs to the PAL/histidase family. Post-translationally, contains an active site 4-methylidene-imidazol-5-one (MIO), which is formed autocatalytically by cyclization and dehydration of residues Ala-Ser-Gly.

It is found in the cytoplasm. It carries out the reaction L-histidine = trans-urocanate + NH4(+). It functions in the pathway amino-acid degradation; L-histidine degradation into L-glutamate; N-formimidoyl-L-glutamate from L-histidine: step 1/3. This chain is Histidine ammonia-lyase, found in Bacillus cereus (strain B4264).